A 268-amino-acid chain; its full sequence is Tryptophan synthase alpha chain (268 aa).

Active-site proton acceptor residues include Glu49 and Asp60.

This sequence belongs to the TrpA family. In terms of assembly, tetramer of two alpha and two beta chains.

The enzyme catalyses (1S,2R)-1-C-(indol-3-yl)glycerol 3-phosphate + L-serine = D-glyceraldehyde 3-phosphate + L-tryptophan + H2O. It participates in amino-acid biosynthesis; L-tryptophan biosynthesis; L-tryptophan from chorismate: step 5/5. In terms of biological role, the alpha subunit is responsible for the aldol cleavage of indoleglycerol phosphate to indole and glyceraldehyde 3-phosphate. The protein is Tryptophan synthase alpha chain of Salmonella choleraesuis (strain SC-B67).